A 527-amino-acid polypeptide reads, in one-letter code: Probable bifunctional tRNA threonylcarbamoyladenosine biosynthesis protein (527 aa).

Residues 1–324 (MIVLGLEGTA…YRIDEVDAPW (324 aa)) are kae1. Residues His-107, His-111, and Tyr-128 each coordinate Fe cation. L-threonylcarbamoyladenylate contacts are provided by residues 128–132 (YVSGG), Asp-160, Gly-173, Glu-177, and Asn-257. Asp-285 is a Fe cation binding site. The 198-residue stretch at 330-527 (VKYRDAGAES…EDIRRRHRYV (198 aa)) folds into the Protein kinase domain. ATP is bound by residues 333-341 (RDAGAESRI) and Lys-354. Asp-445 (proton acceptor; for kinase activity) is an active-site residue.

This sequence in the N-terminal section; belongs to the KAE1 / TsaD family. In the C-terminal section; belongs to the protein kinase superfamily. Tyr protein kinase family. BUD32 subfamily. In terms of assembly, component of the KEOPS complex that consists of Kae1, Bud32, Cgi121 and Pcc1; the whole complex dimerizes. The cofactor is Fe(2+).

It is found in the cytoplasm. The enzyme catalyses L-seryl-[protein] + ATP = O-phospho-L-seryl-[protein] + ADP + H(+). It catalyses the reaction L-threonyl-[protein] + ATP = O-phospho-L-threonyl-[protein] + ADP + H(+). It carries out the reaction L-threonylcarbamoyladenylate + adenosine(37) in tRNA = N(6)-L-threonylcarbamoyladenosine(37) in tRNA + AMP + H(+). Its function is as follows. Required for the formation of a threonylcarbamoyl group on adenosine at position 37 (t(6)A37) in tRNAs that read codons beginning with adenine. Is a component of the KEOPS complex that is probably involved in the transfer of the threonylcarbamoyl moiety of threonylcarbamoyl-AMP (TC-AMP) to the N6 group of A37. The Kae1 domain likely plays a direct catalytic role in this reaction. The Bud32 domain probably displays kinase activity that regulates Kae1 function. The sequence is that of Probable bifunctional tRNA threonylcarbamoyladenosine biosynthesis protein from Thermoplasma volcanium (strain ATCC 51530 / DSM 4299 / JCM 9571 / NBRC 15438 / GSS1).